The sequence spans 362 residues: Spermidine/putrescine import ATP-binding protein PotA (362 aa).

The ABC transporter domain maps to 6 to 236 (VELKHVGKRY…PVNHFVADFI (231 aa)). 38–45 (GPSGSGKT) serves as a coordination point for ATP.

Belongs to the ABC transporter superfamily. Spermidine/putrescine importer (TC 3.A.1.11.1) family. As to quaternary structure, the complex is composed of two ATP-binding proteins (PotA), two transmembrane proteins (PotB and PotC) and a solute-binding protein (PotD).

Its subcellular location is the cell membrane. It carries out the reaction ATP + H2O + polyamine-[polyamine-binding protein]Side 1 = ADP + phosphate + polyamineSide 2 + [polyamine-binding protein]Side 1.. Functionally, part of the ABC transporter complex PotABCD involved in spermidine/putrescine import. Responsible for energy coupling to the transport system. The chain is Spermidine/putrescine import ATP-binding protein PotA from Lacticaseibacillus paracasei (strain ATCC 334 / BCRC 17002 / CCUG 31169 / CIP 107868 / KCTC 3260 / NRRL B-441) (Lactobacillus paracasei).